A 302-amino-acid polypeptide reads, in one-letter code: Sulfate adenylyltransferase subunit 2 (302 aa).

The protein belongs to the PAPS reductase family. CysD subfamily. In terms of assembly, heterodimer composed of CysD, the smaller subunit, and CysN.

It catalyses the reaction sulfate + ATP + H(+) = adenosine 5'-phosphosulfate + diphosphate. Its pathway is sulfur metabolism; hydrogen sulfide biosynthesis; sulfite from sulfate: step 1/3. In terms of biological role, with CysN forms the ATP sulfurylase (ATPS) that catalyzes the adenylation of sulfate producing adenosine 5'-phosphosulfate (APS) and diphosphate, the first enzymatic step in sulfur assimilation pathway. APS synthesis involves the formation of a high-energy phosphoric-sulfuric acid anhydride bond driven by GTP hydrolysis by CysN coupled to ATP hydrolysis by CysD. The sequence is that of Sulfate adenylyltransferase subunit 2 from Aeromonas hydrophila subsp. hydrophila (strain ATCC 7966 / DSM 30187 / BCRC 13018 / CCUG 14551 / JCM 1027 / KCTC 2358 / NCIMB 9240 / NCTC 8049).